The sequence spans 226 residues: V-type proton ATPase subunit E 2 (226 aa).

Belongs to the V-ATPase E subunit family. As to quaternary structure, V-ATPase is a heteromultimeric enzyme made up of two complexes: the ATP-hydrolytic V1 complex and the proton translocation V0 complex. The V1 complex consists of three catalytic AB heterodimers that form a heterohexamer, three peripheral stalks each consisting of EG heterodimers, one central rotor including subunits D and F, and the regulatory subunits C and H. The proton translocation complex V0 consists of the proton transport subunit a, a ring of proteolipid subunits c9c'', rotary subunit d, subunits e and f, and the accessory subunits ATP6AP1/Ac45 and ATP6AP2/PRR.

Functionally, subunit of the V1 complex of vacuolar(H+)-ATPase (V-ATPase), a multisubunit enzyme composed of a peripheral complex (V1) that hydrolyzes ATP and a membrane integral complex (V0) that translocates protons. V-ATPase is responsible for acidifying and maintaining the pH of intracellular compartments and in some cell types, is targeted to the plasma membrane, where it is responsible for acidifying the extracellular environment. In Bos taurus (Bovine), this protein is V-type proton ATPase subunit E 2 (ATP6V1E2).